The sequence spans 462 residues: Sensor histidine kinase RegB (462 aa).

Residues methionine 1–leucine 25 are Cytoplasmic-facing. A helical membrane pass occupies residues leucine 26–leucine 45. The Extracellular portion of the chain corresponds to glycine 46 to methionine 51. The helical transmembrane segment at glycine 52–phenylalanine 70 threads the bilayer. Residues valine 71–leucine 78 are Cytoplasmic-facing. Residues threonine 79–phenylalanine 96 form a helical membrane-spanning segment. Over leucine 97 to glycine 103 the chain is Extracellular. The chain crosses the membrane as a helical span at residues leucine 104–leucine 123. The Cytoplasmic portion of the chain corresponds to aspartate 124 to valine 129. The helical transmembrane segment at isoleucine 130 to leucine 149 threads the bilayer. The Extracellular portion of the chain corresponds to isoleucine 150–glutamate 164. Residues phenylalanine 165–serine 182 traverse the membrane as a helical segment. The Cytoplasmic segment spans residues arginine 183–threonine 462. A Histidine kinase domain is found at alanine 218 to arginine 445. The residue at position 221 (histidine 221) is a Phosphohistidine; by autocatalysis.

The protein localises to the cell inner membrane. It carries out the reaction ATP + protein L-histidine = ADP + protein N-phospho-L-histidine.. Its function is as follows. Member of the two-component regulatory system RegB/RegA. Involved in the positive regulation of photosynthesis gene expression in response to anaerobiosis. Also involved in positive regulation of the cbbI and cbbII Calvin cycle CO2 fixation operons, as well as in regulation of expression of genes involved in alternative CO2 fixation pathways. Phosphorylates RegA/PrrA. The chain is Sensor histidine kinase RegB (regB) from Cereibacter sphaeroides (Rhodobacter sphaeroides).